We begin with the raw amino-acid sequence, 156 residues long: Pheromone-binding protein Gp-9 (156 aa).

An N-terminal signal peptide occupies residues 1-19; sequence MKTFVFHIFIFALVAFASA. 3 cysteine pairs are disulfide-bonded: Cys-37/Cys-77, Cys-73/Cys-129, and Cys-118/Cys-138.

Belongs to the PBP/GOBP family. As to quaternary structure, homodimer.

It localises to the secreted. Functionally, colony queen number, a major feature of social organization, is associated with worker genotype for Gp-9. Colonies are headed by either a single reproductive queen (monogyne form) or multiple queens (polygyne form). Differences in worker Gp-9 genotypes between social forms may cause differences in workers' abilities to recognize queens and regulate their numbers. The sequence is that of Pheromone-binding protein Gp-9 from Solenopsis globularia littoralis (Fire ant).